We begin with the raw amino-acid sequence, 154 residues long: Protein X (154 aa).

The interval 68–117 is mitochondrial targeting sequence; the sequence is PCALRFTSARRMETTVNTHMILPKVLHKRTLGLPAMSTIDLEAYFKDCLF.

The protein belongs to the orthohepadnavirus protein X family. In terms of assembly, may form homodimer. May interact with host CEBPA, CFLAR, CREB1, DDB1, E4F1, HBXIP, HSPD1/HSP60, NFKBIA, POLR2E and SMAD4. Interacts with host SMC5-SMC6 complex and induces its degradation. Interacts with host TRPC4AP; leading to prevent ubiquitination of TRPC4AP. Interacts with host PLSCR1; this interaction promotes ubiquitination and degradation of HBx and impairs HBx-mediated cell proliferation. Post-translationally, a fraction may be phosphorylated in insect cells and HepG2 cells, a human hepatoblastoma cell line. Phosphorylated in vitro by host protein kinase C or mitogen-activated protein kinase. N-acetylated in insect cells.

It is found in the host cytoplasm. The protein localises to the host nucleus. Its subcellular location is the host mitochondrion. Its function is as follows. Multifunctional protein that plays a role in silencing host antiviral defenses and promoting viral transcription. Does not seem to be essential for HBV infection. May be directly involved in development of cirrhosis and liver cancer (hepatocellular carcinoma). Most of cytosolic activities involve modulation of cytosolic calcium. The effect on apoptosis is controversial depending on the cell types in which the studies have been conducted. May induce apoptosis by localizing in mitochondria and causing loss of mitochondrial membrane potential. May also modulate apoptosis by binding host CFLAR, a key regulator of the death-inducing signaling complex (DISC). Promotes viral transcription by using the host E3 ubiquitin ligase DDB1 to target the SMC5-SMC6 complex to proteasomal degradation. This host complex would otherwise bind to viral episomal DNA, and prevents its transcription. Moderately stimulates transcription of many different viral and cellular transcription elements. Promoters and enhancers stimulated by HBx contain DNA binding sites for NF-kappa-B, AP-1, AP-2, c-EBP, ATF/CREB, or the calcium-activated factor NF-AT. This Hepatitis B virus genotype C subtype ayw (isolate Australia/AustRC/1992) (HBV-C) protein is Protein X.